Consider the following 299-residue polypeptide: ATP phosphoribosyltransferase (299 aa).

The protein belongs to the ATP phosphoribosyltransferase family. Long subfamily. As to quaternary structure, equilibrium between an active dimeric form, an inactive hexameric form and higher aggregates. Interconversion between the various forms is largely reversible and is influenced by the natural substrates and inhibitors of the enzyme. Requires Mg(2+) as cofactor.

The protein resides in the cytoplasm. It carries out the reaction 1-(5-phospho-beta-D-ribosyl)-ATP + diphosphate = 5-phospho-alpha-D-ribose 1-diphosphate + ATP. It functions in the pathway amino-acid biosynthesis; L-histidine biosynthesis; L-histidine from 5-phospho-alpha-D-ribose 1-diphosphate: step 1/9. Its activity is regulated as follows. Feedback inhibited by histidine. Catalyzes the condensation of ATP and 5-phosphoribose 1-diphosphate to form N'-(5'-phosphoribosyl)-ATP (PR-ATP). Has a crucial role in the pathway because the rate of histidine biosynthesis seems to be controlled primarily by regulation of HisG enzymatic activity. The chain is ATP phosphoribosyltransferase from Enterobacter sp. (strain 638).